Here is a 518-residue protein sequence, read N- to C-terminus: MIPDVSQALAWLEKHPQALKGIQRGLERETLRVNADGTLATTGHPEALGSALTHKWITTDFAEALLEFITPVDGDIEHMLTFMRDLHRYTARNMGDERMWPLSMPCYIAEGQDIELAQYGTSNTGRFKTLYREGLKNRYGALMQTISGVHYNFSLPMAFWQAKCGDISGADAKEKISAGYFRVIRNYYRFGWVIPYLFGASPAICSSFLQGKPTSLPFEKTECGMYYLPYATSLRLSDLGYTNKSQSNLGITFNDLYEYVAGLKQAIKTPSEEYAKIGIEKDGKRLQINSNVLQIENELYAPIRPKRVTRSGESPSDALLRGGIEYIEVRSLDINPFSPIGVDEQQVRFLDLFMVWCALADAPEMSSSELACTRVNWNRVILEGRKPGLTLGIGCETAQFPLLQVGKDLFRDLKRVAQTLDSINGGEAYQKVCDELVACFDNPDLTFSARILRSMIDTGIGGTGKAFAEAYRNLLREEPLEILREEDFVAEREASERRQQEMEAADTEPFAVWLEKHA.

This sequence belongs to the glutamate--cysteine ligase type 1 family. Type 1 subfamily.

The catalysed reaction is L-cysteine + L-glutamate + ATP = gamma-L-glutamyl-L-cysteine + ADP + phosphate + H(+). It participates in sulfur metabolism; glutathione biosynthesis; glutathione from L-cysteine and L-glutamate: step 1/2. The protein is Glutamate--cysteine ligase of Escherichia coli O139:H28 (strain E24377A / ETEC).